A 145-amino-acid chain; its full sequence is D-aminoacyl-tRNA deacylase (145 aa).

The Gly-cisPro motif, important for rejection of L-amino acids motif lies at 137-138; the sequence is GP.

This sequence belongs to the DTD family. Homodimer.

The protein resides in the cytoplasm. It carries out the reaction glycyl-tRNA(Ala) + H2O = tRNA(Ala) + glycine + H(+). The catalysed reaction is a D-aminoacyl-tRNA + H2O = a tRNA + a D-alpha-amino acid + H(+). Functionally, an aminoacyl-tRNA editing enzyme that deacylates mischarged D-aminoacyl-tRNAs. Also deacylates mischarged glycyl-tRNA(Ala), protecting cells against glycine mischarging by AlaRS. Acts via tRNA-based rather than protein-based catalysis; rejects L-amino acids rather than detecting D-amino acids in the active site. By recycling D-aminoacyl-tRNA to D-amino acids and free tRNA molecules, this enzyme counteracts the toxicity associated with the formation of D-aminoacyl-tRNA entities in vivo and helps enforce protein L-homochirality. The sequence is that of D-aminoacyl-tRNA deacylase from Proteus mirabilis (strain HI4320).